Consider the following 197-residue polypeptide: Adenylate kinase (197 aa).

Position 7 to 15 (7 to 15 (ALPGSGKTT)) interacts with ATP.

This sequence belongs to the archaeal adenylate kinase family.

It is found in the cytoplasm. The catalysed reaction is AMP + ATP = 2 ADP. In Pyrobaculum aerophilum (strain ATCC 51768 / DSM 7523 / JCM 9630 / CIP 104966 / NBRC 100827 / IM2), this protein is Adenylate kinase (adkA).